Consider the following 419-residue polypeptide: Multifunctional CCA protein (419 aa).

ATP-binding residues include glycine 8 and arginine 11. Glycine 8 and arginine 11 together coordinate CTP. Mg(2+)-binding residues include aspartate 21 and aspartate 23. ATP is bound by residues arginine 91, arginine 137, and arginine 140. CTP contacts are provided by arginine 91, arginine 137, and arginine 140. One can recognise an HD domain in the interval 228–334 (SFLHTMLVLQ…IKLFNKLDVW (107 aa)).

This sequence belongs to the tRNA nucleotidyltransferase/poly(A) polymerase family. Bacterial CCA-adding enzyme type 1 subfamily. As to quaternary structure, monomer. Can also form homodimers and oligomers. Mg(2+) is required as a cofactor. It depends on Ni(2+) as a cofactor.

It catalyses the reaction a tRNA precursor + 2 CTP + ATP = a tRNA with a 3' CCA end + 3 diphosphate. The enzyme catalyses a tRNA with a 3' CCA end + 2 CTP + ATP = a tRNA with a 3' CCACCA end + 3 diphosphate. In terms of biological role, catalyzes the addition and repair of the essential 3'-terminal CCA sequence in tRNAs without using a nucleic acid template. Adds these three nucleotides in the order of C, C, and A to the tRNA nucleotide-73, using CTP and ATP as substrates and producing inorganic pyrophosphate. tRNA 3'-terminal CCA addition is required both for tRNA processing and repair. Also involved in tRNA surveillance by mediating tandem CCA addition to generate a CCACCA at the 3' terminus of unstable tRNAs. While stable tRNAs receive only 3'-terminal CCA, unstable tRNAs are marked with CCACCA and rapidly degraded. This is Multifunctional CCA protein from Mannheimia succiniciproducens (strain KCTC 0769BP / MBEL55E).